Reading from the N-terminus, the 399-residue chain is Tyrosine--tRNA ligase 2 (399 aa).

The 'HIGH' region signature appears at 42–51 (PTAPDLHLGH). The 'KMSKS' region signature appears at 226-230 (KMSKS). Lys-229 contacts ATP. The S4 RNA-binding domain maps to 336-396 (MPVASVLNKA…GKKAFARITL (61 aa)).

It belongs to the class-I aminoacyl-tRNA synthetase family. TyrS type 2 subfamily. Homodimer.

It localises to the cytoplasm. It catalyses the reaction tRNA(Tyr) + L-tyrosine + ATP = L-tyrosyl-tRNA(Tyr) + AMP + diphosphate + H(+). Functionally, catalyzes the attachment of tyrosine to tRNA(Tyr) in a two-step reaction: tyrosine is first activated by ATP to form Tyr-AMP and then transferred to the acceptor end of tRNA(Tyr). This chain is Tyrosine--tRNA ligase 2, found in Pseudomonas aeruginosa (strain ATCC 15692 / DSM 22644 / CIP 104116 / JCM 14847 / LMG 12228 / 1C / PRS 101 / PAO1).